The primary structure comprises 154 residues: Histone H2B type F-M (154 aa).

Low complexity predominate over residues 1–18 (MAAASAMAEASSETTSEE). Residues 1 to 61 (MAAASAMAEA…RGDSFGDSFT (61 aa)) form a disordered region. The span at 34–50 (QKQKRRGCRGSRRRHAN) shows a compositional bias: basic residues.

The protein belongs to the histone H2B family. The nucleosome is a histone octamer containing two molecules each of H2A, H2B, H3 and H4 assembled in one H3-H4 heterotetramer and two H2A-H2B heterodimers. The octamer wraps approximately 147 bp of DNA.

It is found in the nucleus. The protein localises to the chromosome. Core component of nucleosome. Nucleosomes wrap and compact DNA into chromatin, limiting DNA accessibility to the cellular machineries which require DNA as a template. Histones thereby play a central role in transcription regulation, DNA repair, DNA replication and chromosomal stability. DNA accessibility is regulated via a complex set of post-translational modifications of histones, also called histone code, and nucleosome remodeling. The protein is Histone H2B type F-M of Homo sapiens (Human).